The following is a 521-amino-acid chain: Type II methyltransferase M.AluI (521 aa).

Positions 8–491 (YSFVDLFAGI…REHVRRDRAL (484 aa)) constitute an SAM-dependent MTase C5-type domain. The active site involves Cys84.

This sequence belongs to the class I-like SAM-binding methyltransferase superfamily. C5-methyltransferase family.

The catalysed reaction is a 2'-deoxycytidine in DNA + S-adenosyl-L-methionine = a 5-methyl-2'-deoxycytidine in DNA + S-adenosyl-L-homocysteine + H(+). A methylase, recognizes the double-stranded sequence 5'-AGCT-3', methylates C-3 on both strands, and protects the DNA from cleavage by the AluI endonuclease. This is Type II methyltransferase M.AluI from Cellulosimicrobium cellulans (Arthrobacter luteus).